A 330-amino-acid chain; its full sequence is Fructose-1,6-bisphosphatase class 1 (330 aa).

Mg(2+) is bound by residues glutamate 84, aspartate 103, leucine 105, and aspartate 106. Substrate-binding positions include 106–109 (DGSS), asparagine 196, and lysine 262. Glutamate 268 serves as a coordination point for Mg(2+).

The protein belongs to the FBPase class 1 family. In terms of assembly, homotetramer. Requires Mg(2+) as cofactor.

It localises to the cytoplasm. It catalyses the reaction beta-D-fructose 1,6-bisphosphate + H2O = beta-D-fructose 6-phosphate + phosphate. Its pathway is carbohydrate biosynthesis; gluconeogenesis. This Shewanella frigidimarina (strain NCIMB 400) protein is Fructose-1,6-bisphosphatase class 1.